Here is a 391-residue protein sequence, read N- to C-terminus: MIPYKGKYHFTSESVTEGHPDKVADQISDAVLDVLLEQDPDSRVACETMVTTGMAIIAGEITTRGYADLPQVVRDTIKEIGYNNSSMGFDWQTCAVLSSIDKQSPDIAQGVDRQDPENQGAGDQGMMFGFACDETPTLMPAPIFWAHQLSQKLTAVRKDGTVDFLRPDGKTQVSFEYVDGRPVRINNVVVSTQHAEQASQTDIIDAIRTHVIRPVLEPSGFFNEKDCEIFINTTGRFVIGGPMGDCGLTGRKIIQDTYGGMGSHGGGAFSGKDPSKVDRSGAYMGRYIAKNVVAAGLAPKCEVQIAYCIGVADPVSVLCTSLGSSDISDEVLTQAVRDVFDLRPYHISKRLDLRRPIYKKSACYGHFGREIPEFSWERTDAVDDLRAAARR.

Position 19 (histidine 19) interacts with ATP. Mg(2+) is bound at residue aspartate 21. A K(+)-binding site is contributed by glutamate 47. Residues glutamate 60 and glutamine 103 each contribute to the L-methionine site. Residues 103 to 113 form a flexible loop region; it reads QSPDIAQGVDR. ATP-binding positions include 168–170, 236–237, aspartate 245, 251–252, alanine 268, and lysine 272; these read DGK, RF, and RK. Residue aspartate 245 coordinates L-methionine. Lysine 276 serves as a coordination point for L-methionine.

This sequence belongs to the AdoMet synthase family. Homotetramer; dimer of dimers. It depends on Mg(2+) as a cofactor. K(+) is required as a cofactor.

It is found in the cytoplasm. The enzyme catalyses L-methionine + ATP + H2O = S-adenosyl-L-methionine + phosphate + diphosphate. The protein operates within amino-acid biosynthesis; S-adenosyl-L-methionine biosynthesis; S-adenosyl-L-methionine from L-methionine: step 1/1. Its function is as follows. Catalyzes the formation of S-adenosylmethionine (AdoMet) from methionine and ATP. The overall synthetic reaction is composed of two sequential steps, AdoMet formation and the subsequent tripolyphosphate hydrolysis which occurs prior to release of AdoMet from the enzyme. The sequence is that of S-adenosylmethionine synthase from Oleidesulfovibrio alaskensis (strain ATCC BAA-1058 / DSM 17464 / G20) (Desulfovibrio alaskensis).